The sequence spans 379 residues: Nitric oxide reductase FlRd-NAD(+) reductase (379 aa).

Belongs to the FAD-dependent oxidoreductase family. It depends on FAD as a cofactor.

It is found in the cytoplasm. The catalysed reaction is 2 reduced [nitric oxide reductase rubredoxin domain] + NAD(+) + H(+) = 2 oxidized [nitric oxide reductase rubredoxin domain] + NADH. The protein operates within nitrogen metabolism; nitric oxide reduction. In terms of biological role, one of at least two accessory proteins for anaerobic nitric oxide (NO) reductase. Reduces the rubredoxin moiety of NO reductase. This Pectobacterium atrosepticum (strain SCRI 1043 / ATCC BAA-672) (Erwinia carotovora subsp. atroseptica) protein is Nitric oxide reductase FlRd-NAD(+) reductase.